We begin with the raw amino-acid sequence, 814 residues long: DNA ligase (814 aa).

NAD(+)-binding positions include 46-50, 95-96, and Glu-129; these read DAEYD and SL. The active-site N6-AMP-lysine intermediate is the Lys-131. The NAD(+) site is built by Arg-152, Glu-189, Lys-305, and Lys-329. 4 residues coordinate Zn(2+): Cys-434, Cys-437, Cys-458, and Cys-464. Residues 525–548 form a disordered region; sequence LSAQRRSEGEPAPKKPTKKKGEEE. The BRCT domain maps to 735-814; sequence TSAAAFAGKT…DDWLAMLAEA (80 aa).

This sequence belongs to the NAD-dependent DNA ligase family. LigA subfamily. Mg(2+) serves as cofactor. The cofactor is Mn(2+).

The enzyme catalyses NAD(+) + (deoxyribonucleotide)n-3'-hydroxyl + 5'-phospho-(deoxyribonucleotide)m = (deoxyribonucleotide)n+m + AMP + beta-nicotinamide D-nucleotide.. Functionally, DNA ligase that catalyzes the formation of phosphodiester linkages between 5'-phosphoryl and 3'-hydroxyl groups in double-stranded DNA using NAD as a coenzyme and as the energy source for the reaction. It is essential for DNA replication and repair of damaged DNA. This chain is DNA ligase, found in Methylorubrum extorquens (strain PA1) (Methylobacterium extorquens).